The sequence spans 232 residues: Large ribosomal subunit protein uL16m (232 aa).

The transit peptide at 1 to 41 (MFPYLTRMNLSIKMGGLTLKESSPNAFLNNTTIARRFKHEY) directs the protein to the mitochondrion.

It belongs to the universal ribosomal protein uL16 family. Component of the mitochondrial large ribosomal subunit (mt-LSU). Mature yeast 74S mitochondrial ribosomes consist of a small (37S) and a large (54S) subunit. The 37S small subunit contains a 15S ribosomal RNA (15S mt-rRNA) and 34 different proteins. The 54S large subunit contains a 21S rRNA (21S mt-rRNA) and 46 different proteins.

It localises to the mitochondrion. Component of the mitochondrial ribosome (mitoribosome), a dedicated translation machinery responsible for the synthesis of mitochondrial genome-encoded proteins, including at least some of the essential transmembrane subunits of the mitochondrial respiratory chain. The mitoribosomes are attached to the mitochondrial inner membrane and translation products are cotranslationally integrated into the membrane. In Saccharomyces cerevisiae (strain ATCC 204508 / S288c) (Baker's yeast), this protein is Large ribosomal subunit protein uL16m (MRPL16).